The chain runs to 318 residues: Mitochondrial thiamine pyrophosphate carrier (318 aa).

Solcar repeat units follow at residues 13–106 (ISNV…LTEL), 116–202 (RDFS…LKRA), and 214–309 (NGNF…FCNF). A helical transmembrane segment spans residues 19–39 (AVAGSVSGLVTRVLISPLDVI). S51 bears the Phosphoserine mark. Transmembrane regions (helical) follow at residues 87 to 107 (LLSIGYGAVQFLSFEALTELV), 122 to 142 (FLCGGLSACVATLAVHPVDVL), 173 to 193 (VFYKGLNPTLIAIFPYAGFQF), and 220 to 240 (LLCGSGAGVISKTLTYPLDLF). The Substrate recognition signature appears at 241–246 (KKRLQV). A helical transmembrane segment spans residues 293 to 313 (ALSTGLVFFWYELFCNFFHHM).

This sequence belongs to the mitochondrial carrier (TC 2.A.29) family.

Its subcellular location is the mitochondrion membrane. It catalyses the reaction thiamine phosphate(out) + thiamine diphosphate(in) = thiamine phosphate(in) + thiamine diphosphate(out). Functionally, mitochondrial transporter mediating uptake of thiamine diphosphate into mitochondria. It is not clear if the antiporter activity is affected by the membrane potential or by the proton electrochemical gradient. The sequence is that of Mitochondrial thiamine pyrophosphate carrier (SLC25A19) from Bos taurus (Bovine).